Reading from the N-terminus, the 90-residue chain is U7-theraphotoxin-Hhn1c (90 aa).

The signal sequence occupies residues 1–19; sequence MKTAIFTVVLALAVFAVLS. The propeptide occupies 20 to 50; the sequence is FGWEANEKALSEEFTELIHEKEAASETEARE. Cystine bridges form between C51–C65, C58–C70, and C64–C81.

This sequence belongs to the neurotoxin 10 (Hwtx-1) family. 13 (Hntx-13) subfamily. As to expression, expressed by the venom gland.

It is found in the secreted. In terms of biological role, ion channel inhibitor. The polypeptide is U7-theraphotoxin-Hhn1c (Cyriopagopus hainanus (Chinese bird spider)).